A 256-amino-acid chain; its full sequence is Protein YABBY 4 (256 aa).

The segment at 30–57 (CNCCDTILAVGVPCSSLFKTVTVRCGHC) adopts a C4-type zinc-finger fold. A disordered region spans residues 127 to 168 (SCASNAPAMQMPPAKPVQQEPELPKNAPASANRPPEKRQRVP).

This sequence belongs to the YABBY family. As to expression, preferentially expressed in immature organs containing meristems and organ primordia. Expressed in phloem of developing vascular tissues of young seedling shoots. Expressed in the phloem of midvein vasculature of young leaves. Does not show polar expression pattern in leaf primordia.

Its subcellular location is the nucleus. Functionally, seems to be associated with phloem cell differentiation. The polypeptide is Protein YABBY 4 (YAB4) (Oryza sativa subsp. japonica (Rice)).